Here is a 403-residue protein sequence, read N- to C-terminus: Leu/Ile/Val-binding protein homolog 8 (403 aa).

The first 26 residues, 1–26, serve as a signal peptide directing secretion; the sequence is MRLSRLLIGASLGVALSSTVFTAALA.

This sequence belongs to the leucine-binding protein family.

In terms of biological role, component of an amino-acid transport system. The polypeptide is Leu/Ile/Val-binding protein homolog 8 (Brucella melitensis biotype 1 (strain ATCC 23456 / CCUG 17765 / NCTC 10094 / 16M)).